A 523-amino-acid polypeptide reads, in one-letter code: Cyclic di-GMP binding protein BcsE (523 aa).

It belongs to the BcsE family.

Functionally, required for cellulose biosynthesis. May have protease activity, but BcsA is not targeted. Binds bis-(3'-5') cyclic diguanylic acid (c-di-GMP). In Salmonella typhimurium (strain LT2 / SGSC1412 / ATCC 700720), this protein is Cyclic di-GMP binding protein BcsE.